The sequence spans 78 residues: Probable Fe(2+)-trafficking protein (78 aa).

The protein belongs to the Fe(2+)-trafficking protein family. Monomer.

Functionally, could be a mediator in iron transactions between iron acquisition and iron-requiring processes, such as synthesis and/or repair of Fe-S clusters in biosynthetic enzymes. This is Probable Fe(2+)-trafficking protein from Buchnera aphidicola subsp. Schizaphis graminum (strain Sg).